Consider the following 196-residue polypeptide: Nucleoid occlusion factor SlmA (196 aa).

The HTH tetR-type domain occupies 7–68 (PNRRDEILQA…GLIEFIEESI (62 aa)). The segment at residues 31-50 (TTAKLAKQVGVSEAALYRHF) is a DNA-binding region (H-T-H motif). The stretch at 71-93 (RVNRILEDEKDTLKRIELLLKLL) forms a coiled coil.

The protein belongs to the nucleoid occlusion factor SlmA family. Homodimer. Interacts with FtsZ.

It localises to the cytoplasm. It is found in the nucleoid. In terms of biological role, required for nucleoid occlusion (NO) phenomenon, which prevents Z-ring formation and cell division over the nucleoid. Acts as a DNA-associated cell division inhibitor that binds simultaneously chromosomal DNA and FtsZ, and disrupts the assembly of FtsZ polymers. SlmA-DNA-binding sequences (SBS) are dispersed on non-Ter regions of the chromosome, preventing FtsZ polymerization at these regions. The protein is Nucleoid occlusion factor SlmA of Aliivibrio fischeri (strain MJ11) (Vibrio fischeri).